We begin with the raw amino-acid sequence, 278 residues long: Protein canopy homolog 3 (278 aa).

The signal sequence occupies residues 1 to 30 (MDSMPEPASRCLLLLPLLLLLLLLLPAPEL). In terms of domain architecture, Saposin B-type spans 47 to 271 (SKCEVCKYVA…EGIQKASPLT (225 aa)). Intrachain disulfides connect Cys49/Cys206, Cys52/Cys194, and Cys104/Cys166. The N-linked (GlcNAc...) asparagine glycan is linked to Asn153. Residues 153-179 (NETSAEVADLKKQCDVLVEEFEEVIED) adopt a coiled-coil conformation. Residues 215–278 (KGDTAALGGK…PLTHSPPDEL (64 aa)) form a disordered region. Residues 233-243 (AKAAGGRSSSS) show a composition bias toward low complexity.

This sequence belongs to the canopy family. Interacts with HSP90B1; this interaction is disrupted in the presence of ATP. Interacts with TLR1, TLR2, TLR4 and TLR9. Strongest interaction with TLR4.

It localises to the endoplasmic reticulum. Functionally, toll-like receptor (TLR)-specific co-chaperone for HSP90B1. Required for proper TLR folding, except that of TLR3, and hence controls TLR exit from the endoplasmic reticulum. Consequently, required for both innate and adaptive immune responses. The protein is Protein canopy homolog 3 (CNPY3) of Homo sapiens (Human).